A 245-amino-acid polypeptide reads, in one-letter code: DNA polymerase sliding clamp (245 aa).

It belongs to the PCNA family. In terms of assembly, homotrimer. The subunits circularize to form a toroid; DNA passes through its center. Replication factor C (RFC) is required to load the toroid on the DNA.

Sliding clamp subunit that acts as a moving platform for DNA processing. Responsible for tethering the catalytic subunit of DNA polymerase and other proteins to DNA during high-speed replication. The polypeptide is DNA polymerase sliding clamp (Methanosarcina barkeri (strain Fusaro / DSM 804)).